The chain runs to 353 residues: Uroporphyrinogen decarboxylase (353 aa).

Substrate contacts are provided by residues 26–30, aspartate 75, tyrosine 161, serine 216, and histidine 332; that span reads RQAGR.

It belongs to the uroporphyrinogen decarboxylase family. As to quaternary structure, homodimer.

It is found in the cytoplasm. It catalyses the reaction uroporphyrinogen III + 4 H(+) = coproporphyrinogen III + 4 CO2. It functions in the pathway porphyrin-containing compound metabolism; protoporphyrin-IX biosynthesis; coproporphyrinogen-III from 5-aminolevulinate: step 4/4. Catalyzes the decarboxylation of four acetate groups of uroporphyrinogen-III to yield coproporphyrinogen-III. This is Uroporphyrinogen decarboxylase from Gluconacetobacter diazotrophicus (strain ATCC 49037 / DSM 5601 / CCUG 37298 / CIP 103539 / LMG 7603 / PAl5).